The following is a 142-amino-acid chain: Large ribosomal subunit protein uL13 (142 aa).

Belongs to the universal ribosomal protein uL13 family. Part of the 50S ribosomal subunit.

Functionally, this protein is one of the early assembly proteins of the 50S ribosomal subunit, although it is not seen to bind rRNA by itself. It is important during the early stages of 50S assembly. This is Large ribosomal subunit protein uL13 from Pseudomonas aeruginosa (strain LESB58).